A 305-amino-acid chain; its full sequence is UDP-3-O-acyl-N-acetylglucosamine deacetylase (305 aa).

Residues H79, H238, and D242 each contribute to the Zn(2+) site. The active-site Proton donor is the H265.

Belongs to the LpxC family. Zn(2+) serves as cofactor.

It carries out the reaction a UDP-3-O-[(3R)-3-hydroxyacyl]-N-acetyl-alpha-D-glucosamine + H2O = a UDP-3-O-[(3R)-3-hydroxyacyl]-alpha-D-glucosamine + acetate. It functions in the pathway glycolipid biosynthesis; lipid IV(A) biosynthesis; lipid IV(A) from (3R)-3-hydroxytetradecanoyl-[acyl-carrier-protein] and UDP-N-acetyl-alpha-D-glucosamine: step 2/6. Catalyzes the hydrolysis of UDP-3-O-myristoyl-N-acetylglucosamine to form UDP-3-O-myristoylglucosamine and acetate, the committed step in lipid A biosynthesis. This Salmonella typhi protein is UDP-3-O-acyl-N-acetylglucosamine deacetylase.